Reading from the N-terminus, the 84-residue chain is Exodeoxyribonuclease 7 small subunit (84 aa).

This sequence belongs to the XseB family. As to quaternary structure, heterooligomer composed of large and small subunits.

Its subcellular location is the cytoplasm. The enzyme catalyses Exonucleolytic cleavage in either 5'- to 3'- or 3'- to 5'-direction to yield nucleoside 5'-phosphates.. Its function is as follows. Bidirectionally degrades single-stranded DNA into large acid-insoluble oligonucleotides, which are then degraded further into small acid-soluble oligonucleotides. The chain is Exodeoxyribonuclease 7 small subunit from Haemophilus influenzae (strain ATCC 51907 / DSM 11121 / KW20 / Rd).